The chain runs to 181 residues: Inner membrane-spanning protein YciB (181 aa).

The next 5 membrane-spanning stretches (helical) occupy residues 3 to 23, 49 to 69, 76 to 96, 119 to 139, and 149 to 169; these read FLFD…YGIY, TMLW…LILQ, WKPS…QAIF, VNAS…YVAF, and FKLF…GLML.

Belongs to the YciB family.

It is found in the cell inner membrane. Plays a role in cell envelope biogenesis, maintenance of cell envelope integrity and membrane homeostasis. The sequence is that of Inner membrane-spanning protein YciB from Nitrosospira multiformis (strain ATCC 25196 / NCIMB 11849 / C 71).